The sequence spans 292 residues: Protease HtpX (292 aa).

Helical transmembrane passes span 5-25 and 34-54; these read IFLF…VMSV and SGLL…SLLL. Residue histidine 140 participates in Zn(2+) binding. Residue glutamate 141 is part of the active site. A Zn(2+)-binding site is contributed by histidine 144. 2 helical membrane-spanning segments follow: residues 155–175 and 193–213; these read LLQG…GGII and IIVF…AMWF. Zn(2+) is bound at residue glutamate 218.

This sequence belongs to the peptidase M48B family. Zn(2+) is required as a cofactor.

It localises to the cell inner membrane. In Xanthomonas oryzae pv. oryzae (strain PXO99A), this protein is Protease HtpX.